Consider the following 304-residue polypeptide: Acetyl-coenzyme A carboxylase carboxyl transferase subunit beta (304 aa).

The CoA carboxyltransferase N-terminal domain occupies 23–292; sequence VWTKCDSCGQ…PNPEAPREGV (270 aa). Zn(2+) is bound by residues Cys27, Cys30, Cys46, and Cys49. The C4-type zinc finger occupies 27-49; that stretch reads CDSCGQVLYRAELERNLEVCPKC. Residues 284-304 form a disordered region; sequence NPEAPREGVVVPPVPDQEPEA. A compositionally biased stretch (pro residues) spans 295–304; the sequence is PPVPDQEPEA.

Belongs to the AccD/PCCB family. Acetyl-CoA carboxylase is a heterohexamer composed of biotin carboxyl carrier protein (AccB), biotin carboxylase (AccC) and two subunits each of ACCase subunit alpha (AccA) and ACCase subunit beta (AccD). Requires Zn(2+) as cofactor.

It is found in the cytoplasm. The enzyme catalyses N(6)-carboxybiotinyl-L-lysyl-[protein] + acetyl-CoA = N(6)-biotinyl-L-lysyl-[protein] + malonyl-CoA. The protein operates within lipid metabolism; malonyl-CoA biosynthesis; malonyl-CoA from acetyl-CoA: step 1/1. In terms of biological role, component of the acetyl coenzyme A carboxylase (ACC) complex. Biotin carboxylase (BC) catalyzes the carboxylation of biotin on its carrier protein (BCCP) and then the CO(2) group is transferred by the transcarboxylase to acetyl-CoA to form malonyl-CoA. The chain is Acetyl-coenzyme A carboxylase carboxyl transferase subunit beta from Shigella boydii serotype 4 (strain Sb227).